A 281-amino-acid polypeptide reads, in one-letter code: Glutamate racemase (281 aa).

Substrate-binding positions include 10–11 (DS) and 42–43 (YG). Catalysis depends on cysteine 74, which acts as the Proton donor/acceptor. Position 75 to 76 (75 to 76 (NT)) interacts with substrate. Cysteine 190 (proton donor/acceptor) is an active-site residue. A substrate-binding site is contributed by 191-192 (TH).

Belongs to the aspartate/glutamate racemases family.

It catalyses the reaction L-glutamate = D-glutamate. It participates in cell wall biogenesis; peptidoglycan biosynthesis. In terms of biological role, provides the (R)-glutamate required for cell wall biosynthesis. The chain is Glutamate racemase from Oenococcus oeni (strain ATCC BAA-331 / PSU-1).